The chain runs to 217 residues: MVIGLTGGIASGKSTVVDFLISEGYQVIDADKVVRQLQEPGGKLYKAIVETYGLDFIADNGQLNREKLGALVFSDSKEREKLSNLQDEIIRTELYDRRDDLLKKMTDKSVSKNFDSKSQGKNLSVNKPIFMDIPLLIEYNYTGFDEIWLVSLPEKIQLERLMARNKFTEEEAKKRISSQMPLSEKQKVADVILDNFGTIEALKKQIQRELARIEEQK.

Residues 2-217 form the DPCK domain; the sequence is VIGLTGGIAS…RELARIEEQK (216 aa). Residue 10 to 15 participates in ATP binding; the sequence is ASGKST.

This sequence belongs to the CoaE family.

The protein localises to the cytoplasm. It catalyses the reaction 3'-dephospho-CoA + ATP = ADP + CoA + H(+). It participates in cofactor biosynthesis; coenzyme A biosynthesis; CoA from (R)-pantothenate: step 5/5. In terms of biological role, catalyzes the phosphorylation of the 3'-hydroxyl group of dephosphocoenzyme A to form coenzyme A. The chain is Dephospho-CoA kinase from Lactococcus lactis subsp. lactis (strain IL1403) (Streptococcus lactis).